The primary structure comprises 543 residues: CTP synthase (543 aa).

Residues 1–265 (MARYIFITGG…DEEVLAAFGI (265 aa)) are amidoligase domain. Residue Ser-13 participates in CTP binding. Ser-13 is a binding site for UTP. ATP is bound at residue 14–19 (SLGKGL). L-glutamine is bound at residue Tyr-54. Asp-71 is a binding site for ATP. Mg(2+) contacts are provided by Asp-71 and Glu-139. Residues 146–148 (DIE), 186–191 (KTKPTQ), and Lys-222 each bind CTP. Residues 186–191 (KTKPTQ) and Lys-222 contribute to the UTP site. ATP is bound at residue 238-240 (RDA). The Glutamine amidotransferase type-1 domain occupies 291–542 (TIAIVGKYTG…IEAAMAQSRL (252 aa)). An L-glutamine-binding site is contributed by Gly-353. The Nucleophile; for glutamine hydrolysis role is filled by Cys-380. L-glutamine contacts are provided by residues 381–384 (FGMQ), Glu-404, and Arg-470. Residues His-515 and Glu-517 contribute to the active site.

The protein belongs to the CTP synthase family. Homotetramer.

It catalyses the reaction UTP + L-glutamine + ATP + H2O = CTP + L-glutamate + ADP + phosphate + 2 H(+). It carries out the reaction L-glutamine + H2O = L-glutamate + NH4(+). The enzyme catalyses UTP + NH4(+) + ATP = CTP + ADP + phosphate + 2 H(+). Its pathway is pyrimidine metabolism; CTP biosynthesis via de novo pathway; CTP from UDP: step 2/2. With respect to regulation, allosterically activated by GTP, when glutamine is the substrate; GTP has no effect on the reaction when ammonia is the substrate. The allosteric effector GTP functions by stabilizing the protein conformation that binds the tetrahedral intermediate(s) formed during glutamine hydrolysis. Inhibited by the product CTP, via allosteric rather than competitive inhibition. Catalyzes the ATP-dependent amination of UTP to CTP with either L-glutamine or ammonia as the source of nitrogen. Regulates intracellular CTP levels through interactions with the four ribonucleotide triphosphates. In Rhodopseudomonas palustris (strain BisA53), this protein is CTP synthase.